The chain runs to 451 residues: UDP-N-acetylmuramate--L-alanine ligase (451 aa).

110–116 provides a ligand contact to ATP; it reads GTHGKTT.

This sequence belongs to the MurCDEF family.

The protein localises to the cytoplasm. The enzyme catalyses UDP-N-acetyl-alpha-D-muramate + L-alanine + ATP = UDP-N-acetyl-alpha-D-muramoyl-L-alanine + ADP + phosphate + H(+). It participates in cell wall biogenesis; peptidoglycan biosynthesis. Cell wall formation. In Francisella tularensis subsp. tularensis (strain SCHU S4 / Schu 4), this protein is UDP-N-acetylmuramate--L-alanine ligase.